The following is a 330-amino-acid chain: 7,8-didemethyl-8-hydroxy-5-deazariboflavin synthase (330 aa).

Residues 5-245 (VTFSRNVFIP…SDVAVQVAPN (241 aa)) enclose the Radical SAM core domain. The [4Fe-4S] cluster site is built by Cys19, Cys23, and Cys26.

It belongs to the radical SAM superfamily. CofG family. As to quaternary structure, consists of two subunits, CofG and CofH. The cofactor is [4Fe-4S] cluster.

The catalysed reaction is 5-amino-5-(4-hydroxybenzyl)-6-(D-ribitylimino)-5,6-dihydrouracil + S-adenosyl-L-methionine = 7,8-didemethyl-8-hydroxy-5-deazariboflavin + 5'-deoxyadenosine + L-methionine + NH4(+) + H(+). Its pathway is cofactor biosynthesis; coenzyme F0 biosynthesis. In terms of biological role, catalyzes the radical-mediated synthesis of 7,8-didemethyl-8-hydroxy-5-deazariboflavin from 5-amino-5-(4-hydroxybenzyl)-6-(D-ribitylimino)-5,6-dihydrouracil. This is 7,8-didemethyl-8-hydroxy-5-deazariboflavin synthase from Methanococcoides burtonii (strain DSM 6242 / NBRC 107633 / OCM 468 / ACE-M).